The chain runs to 269 residues: Dynein regulatory complex protein 8 (269 aa).

The disordered stretch occupies residues 1-113 (MLGPGQVRLR…RTGKGLGYNS (113 aa)). Residues 54–76 (AQGSSSPGIQSGPSSRPGSPRGA) show a composition bias toward low complexity. 2 EF-hand domains span residues 150-185 (EFHKKIKEAFEVFDHESNNTVDVREIGTIIRSLGCC) and 228-263 (IPEDVLLRAFEVLDSAKRGFLTKDELIKYMTEEDGV).

Belongs to the DRC8 family. In terms of assembly, component of the nexin-dynein regulatory complex (N-DRC).

The protein resides in the cytoplasm. The protein localises to the cytoskeleton. It localises to the flagellum axoneme. Its function is as follows. Component of the nexin-dynein regulatory complex (N-DRC), a key regulator of ciliary/flagellar motility which maintains the alignment and integrity of the distal axoneme and regulates microtubule sliding in motile axonemes. This chain is Dynein regulatory complex protein 8 (EFCAB2), found in Homo sapiens (Human).